The sequence spans 446 residues: Histidine--tRNA ligase (446 aa).

It belongs to the class-II aminoacyl-tRNA synthetase family. Homodimer.

The protein resides in the cytoplasm. The enzyme catalyses tRNA(His) + L-histidine + ATP = L-histidyl-tRNA(His) + AMP + diphosphate + H(+). The protein is Histidine--tRNA ligase of Burkholderia pseudomallei (strain K96243).